A 329-amino-acid polypeptide reads, in one-letter code: Biotin--protein ligase 2 (329 aa).

Positions Ile-67–Met-251 constitute a BPL/LPL catalytic domain. Biotin-binding positions include Ser-84–Thr-85, Gln-107, Arg-111–Arg-113, and Lys-182.

The protein belongs to the biotin--protein ligase family. In terms of tissue distribution, highly expressed in seeds. Expressed in roots, leaves, stems, flowers and siliques.

Its subcellular location is the cytoplasm. Its function is as follows. Seems to have no or limited implication in biotin-dependent carboxylase biotinylation in planta. This Arabidopsis thaliana (Mouse-ear cress) protein is Biotin--protein ligase 2 (HCS2).